Here is a 143-residue protein sequence, read N- to C-terminus: Peptide methionine sulfoxide reductase MsrB (143 aa).

The MsrB domain maps to 16–139 (DAELRRRLTP…NSAALNFEAK (124 aa)). C55, C58, C104, and C107 together coordinate Zn(2+). C128 acts as the Nucleophile in catalysis.

The protein belongs to the MsrB Met sulfoxide reductase family. Requires Zn(2+) as cofactor.

It carries out the reaction L-methionyl-[protein] + [thioredoxin]-disulfide + H2O = L-methionyl-(R)-S-oxide-[protein] + [thioredoxin]-dithiol. This chain is Peptide methionine sulfoxide reductase MsrB, found in Burkholderia thailandensis (strain ATCC 700388 / DSM 13276 / CCUG 48851 / CIP 106301 / E264).